Consider the following 530-residue polypeptide: Tetrahydroberberine oxidase (530 aa).

The first 24 residues, 1-24 (MSKMASSIFATFSLLSSLLPTSLA), serve as a signal peptide directing secretion. Cys36 and Cys94 are disulfide-bonded. N-linked (GlcNAc...) asparagine glycosylation is present at Asn51. One can recognise an FAD-binding PCMH-type domain in the interval 72–246 (TTPKPNFIVT…LAWKIRLVPV (175 aa)). The segment at residues 109–171 (HDFEGLSYVS…GVHAFPAGLC (63 aa)) is a cross-link (6-(S-cysteinyl)-8alpha-(pros-histidyl)-FAD (His-Cys)). Asn483 is a glycosylation site (N-linked (GlcNAc...) asparagine).

This sequence belongs to the oxygen-dependent FAD-linked oxidoreductase family. FAD is required as a cofactor. In terms of processing, the FAD cofactor is bound via a bicovalent 6-S-cysteinyl, 8alpha-N1-histidyl FAD linkage.

The catalysed reaction is (S)-canadine + 2 O2 + H(+) = berberine + 2 H2O2. Catalyzes the oxidation of different tetrahydroprotoberberines, such as (S)-canadine, (S)-scoulerine and (S)-corypalmine. Catalyzes the oxidation of (S)-coreximine and (S)-tetrahydropalmatine. Catalyzes the oxidation of different 1-benzylisoquinoline alkaloids, such as (S)-norreticuline, (S)-nororientaline, (S)-coclaurine and (S)-norisoorientaline. Exhibits strict specificity for the (S)-enantiomer of tetrahydroprotoberbirines and 1-benzylisoquinoline alkaloids. The polypeptide is Tetrahydroberberine oxidase (Berberis wilsoniae (Mrs Wilson's barberry)).